The sequence spans 205 residues: uncharacterized protein (205 aa).

This sequence belongs to the flavoredoxin family. It depends on FMN as a cofactor.

This is an uncharacterized protein from Bacillus subtilis (strain 168).